The sequence spans 121 residues: MQDTIFLKGMRFYGYHGALSAENEIGQIFKVDVTLKVDLSEAGRTDNVIDTVHYGEVFEEVKSIMEGKAVNLLEHLAERIANRINSQYNRVMETKVRITKENPPIPGHYDGVGIEIVRENK.

Substrate contacts are provided by residues E22, Y54, and 73–74; that span reads LE. Catalysis depends on K100, which acts as the Proton donor/acceptor.

The protein belongs to the DHNA family. In terms of assembly, homooctamer. Four molecules assemble into a ring, and two rings come together to give a cylinder with a hole of at least 13 a diameter.

The enzyme catalyses 7,8-dihydroneopterin = 6-hydroxymethyl-7,8-dihydropterin + glycolaldehyde. It catalyses the reaction 7,8-dihydroneopterin = 7,8-dihydromonapterin. The protein operates within cofactor biosynthesis; tetrahydrofolate biosynthesis; 2-amino-4-hydroxy-6-hydroxymethyl-7,8-dihydropteridine diphosphate from 7,8-dihydroneopterin triphosphate: step 3/4. Its function is as follows. Catalyzes the conversion of 7,8-dihydroneopterin to 6-hydroxymethyl-7,8-dihydropterin. Can also catalyze the epimerization of carbon 2' of dihydroneopterin to dihydromonapterin. The protein is Dihydroneopterin aldolase (folB) of Staphylococcus aureus (strain MRSA252).